The primary structure comprises 448 residues: Maltoporin (448 aa).

A signal peptide spans Met1–Ala25.

It belongs to the porin LamB (TC 1.B.3) family. In terms of assembly, homotrimer formed of three 18-stranded antiparallel beta-barrels, containing three independent channels.

The protein resides in the cell outer membrane. It catalyses the reaction beta-maltose(in) = beta-maltose(out). Functionally, involved in the transport of maltose and maltodextrins. The polypeptide is Maltoporin (Cronobacter sakazakii (strain ATCC BAA-894) (Enterobacter sakazakii)).